The chain runs to 90 residues: MPAGVDLEKETVITGRVVDGSGQAVGGAFVRLLDGSDEFTAEVVASATGDFRFFAAPGTWTVRALSSAGNGNVTVAPTGAGIHEVDVKVA.

Residue Lys88 forms an Isoglutamyl lysine isopeptide (Lys-Gln) (interchain with Q-Cter in protein Pup) linkage.

This is an uncharacterized protein from Mycolicibacterium smegmatis (strain ATCC 700084 / mc(2)155) (Mycobacterium smegmatis).